Consider the following 179-residue polypeptide: ATP-dependent protease subunit HslV (179 aa).

T6 is a catalytic residue. Na(+) contacts are provided by S164, C167, and T170.

The protein belongs to the peptidase T1B family. HslV subfamily. A double ring-shaped homohexamer of HslV is capped on each side by a ring-shaped HslU homohexamer. The assembly of the HslU/HslV complex is dependent on binding of ATP.

It is found in the cytoplasm. It carries out the reaction ATP-dependent cleavage of peptide bonds with broad specificity.. Its activity is regulated as follows. Allosterically activated by HslU binding. Functionally, protease subunit of a proteasome-like degradation complex believed to be a general protein degrading machinery. The protein is ATP-dependent protease subunit HslV of Listeria monocytogenes serotype 4b (strain CLIP80459).